Consider the following 148-residue polypeptide: UPF0179 protein Mboo_1959 (148 aa).

This sequence belongs to the UPF0179 family.

In Methanoregula boonei (strain DSM 21154 / JCM 14090 / 6A8), this protein is UPF0179 protein Mboo_1959.